Consider the following 390-residue polypeptide: LIM/homeobox protein Lhx4 (390 aa).

2 LIM zinc-binding domains span residues 28 to 87 and 88 to 150; these read PQCA…RFGT and KCTA…AKQN. Residues 157–216 constitute a DNA-binding region (homeobox); the sequence is AKRPRTTITAKQLETLKNAYKNSPKPARHVREQLSSETGLDMRVVQVWFQNRRAKEKRLK. Residues 161–181 form an interaction with DNA region; the sequence is RTTITAKQLETLKNAYKNSPK. Residues 199 to 211 form an interaction with 5-mCpG DNA region; it reads RVVQVWFQNRRAK. Disordered stretches follow at residues 230-253 and 356-390; these read SVKRSRGSSKQEKESSAEDCGVSD and AGGPTSDISTGSSVGYPDFPTSPGSWLDEMDHPPF.

Its subcellular location is the nucleus. Functionally, may play a critical role in the development of respiratory control mechanisms and in the normal growth and maturation of the lung. Binds preferentially to methylated DNA. In Homo sapiens (Human), this protein is LIM/homeobox protein Lhx4 (LHX4).